Reading from the N-terminus, the 492-residue chain is Probable malate:quinone oxidoreductase 1 (492 aa).

This sequence belongs to the MQO family. Requires FAD as cofactor.

The catalysed reaction is (S)-malate + a quinone = a quinol + oxaloacetate. The protein operates within carbohydrate metabolism; tricarboxylic acid cycle; oxaloacetate from (S)-malate (quinone route): step 1/1. The polypeptide is Probable malate:quinone oxidoreductase 1 (Staphylococcus aureus (strain MW2)).